The primary structure comprises 150 residues: Urease accessory protein UreE (150 aa).

This sequence belongs to the UreE family.

It is found in the cytoplasm. In terms of biological role, involved in urease metallocenter assembly. Binds nickel. Probably functions as a nickel donor during metallocenter assembly. The sequence is that of Urease accessory protein UreE from Streptococcus salivarius (strain 57.I).